The sequence spans 878 residues: MSYLNLRLYQRNTQCLHIRKHRLAGFFVRLVVACAFAAQAPLSSADLYFNPRFLADDPQAVADLSRFENGQELPPGTYRVDIYLNNGYMATRDVTFNTGDSEQGIVPCLTRAQLASMGLNTASVAGMNLLADDACVPLTTMVQDATAHLDVGQQRLNLTIPQAFMSNRARGYIPPELWDPGINAGLLNYNFSGNSVQNRIGGNSHYAYLNLQSGLNIGAWRLRDNTTWSYNSSDRSSGSKNKWQHINTWLERDIIPLRSRLTLGDGYTQGDIFDGINFRGAQLASDDNMLPDSQRGFAPVIHGIARGTAQVTIKQNGYDIYNSTVPPGPFTINDIYAAGNSGDLQVTIKEADGSTQIFTVPYSSVPLLQREGHTRYSITAGEYRSGNAQQEKTRFFQSTLLHGLPAGWTIYGGTQLADRYRAFNFGIGKNMGALGALSVDMTQANSTLPDDSQHDGQSVRFLYNKSLNESGTNIQLVGYRYSTSGYFNFADTTYSRMNGYNIETQDGVIQVKPKFTDYYNLAYNKRGKLQLTVTQQLGRTSTLYLSGSHQTYWGTSNVDEQFQAGLNTAFEDINWTLSYSLTKNAWQKGRDQMLALNVNIPFSHWLRSDSKSQWRHASASYSMSHDLNGRMTNLAGVYGTLLEDNNLSYSVQTGYAGGGDGNSGSTGYATLNYRGGYGNANIGYSHSDDIKQLYYGVSGGVLAHANGVTLGQPLNDTVVLVKAPGAKDAKVENQTGVRTDWRGYAVLPYATEYRENRVALDTNTLADNVDLDNAVANVVPTRGAIVRAEFKARVGIKLLMTLTHNNKPLPFGAMVTSESSQSSGIVADNGQVYLSGMPLAGKVQVKWGEEENAHCVANYQLPPESQQQLLTQLSAECR.

The signal sequence occupies residues 1-45 (MSYLNLRLYQRNTQCLHIRKHRLAGFFVRLVVACAFAAQAPLSSA). An intrachain disulfide couples Cys855 to Cys877.

The protein belongs to the fimbrial export usher family.

It is found in the cell outer membrane. Involved in the export and assembly of FimA fimbrial subunits across the outer membrane. The polypeptide is Outer membrane usher protein FimD (fimD) (Escherichia coli (strain K12)).